The primary structure comprises 436 residues: Eukaryotic peptide chain release factor subunit 1-1 (436 aa).

This sequence belongs to the eukaryotic release factor 1 family. As to quaternary structure, heterodimer of two subunits, one of which binds GTP.

Its subcellular location is the cytoplasm. Functionally, directs the termination of nascent peptide synthesis (translation) in response to the termination codons UAA, UAG and UGA. Modulates plant growth and development. The chain is Eukaryotic peptide chain release factor subunit 1-1 (ERF1-1) from Arabidopsis thaliana (Mouse-ear cress).